Here is a 105-residue protein sequence, read N- to C-terminus: Large ribosomal subunit protein uL24 (105 aa).

The protein belongs to the universal ribosomal protein uL24 family. As to quaternary structure, part of the 50S ribosomal subunit.

Its function is as follows. One of two assembly initiator proteins, it binds directly to the 5'-end of the 23S rRNA, where it nucleates assembly of the 50S subunit. Functionally, one of the proteins that surrounds the polypeptide exit tunnel on the outside of the subunit. The chain is Large ribosomal subunit protein uL24 from Xanthomonas campestris pv. campestris (strain 8004).